Reading from the N-terminus, the 388-residue chain is tRNA(Ile)-lysidine synthase (388 aa).

Residue 51 to 56 (SGGRDS) participates in ATP binding.

Belongs to the tRNA(Ile)-lysidine synthase family.

The protein resides in the cytoplasm. It carries out the reaction cytidine(34) in tRNA(Ile2) + L-lysine + ATP = lysidine(34) in tRNA(Ile2) + AMP + diphosphate + H(+). Its function is as follows. Ligates lysine onto the cytidine present at position 34 of the AUA codon-specific tRNA(Ile) that contains the anticodon CAU, in an ATP-dependent manner. Cytidine is converted to lysidine, thus changing the amino acid specificity of the tRNA from methionine to isoleucine. The protein is tRNA(Ile)-lysidine synthase of Bifidobacterium longum (strain DJO10A).